We begin with the raw amino-acid sequence, 352 residues long: Glycoprotein integral membrane protein 1 (352 aa).

The N-terminal stretch at 1-25 (MASRCKIHLTVAYLLILCILASAQS) is a signal peptide. At 26-281 (KQMTTETVVL…KLRRFLSDSV (256 aa)) the chain is on the extracellular side. 6 N-linked (GlcNAc...) asparagine glycosylation sites follow: Asn36, Asn44, Asn89, Asn109, Asn151, and Asn197. Residues 206-245 (NSETTQEEIAAPGKLPETPLRMDPETLYESREEEERRSDS) form a disordered region. Residues 225-244 (LRMDPETLYESREEEERRSD) are compositionally biased toward basic and acidic residues. A helical transmembrane segment spans residues 282 to 302 (PLFFLVMWVVVVGVAGSAVVI). Residues 303–352 (KILDLIFPSCEHRGFFHLNPETLMPDDEKVSLIDNMEGDMTEKSILLIEK) lie on the Cytoplasmic side of the membrane.

It is found in the membrane. The polypeptide is Glycoprotein integral membrane protein 1 (ginm1) (Danio rerio (Zebrafish)).